A 151-amino-acid polypeptide reads, in one-letter code: UPF0208 membrane protein ESA_00924 (151 aa).

A run of 2 helical transmembrane segments spans residues F46–L65 and L69–G91.

The protein belongs to the UPF0208 family.

It localises to the cell inner membrane. In Cronobacter sakazakii (strain ATCC BAA-894) (Enterobacter sakazakii), this protein is UPF0208 membrane protein ESA_00924.